The primary structure comprises 363 residues: Homeobox protein DTH-2 (363 aa).

Residues 133–192 constitute a DNA-binding region (homeobox); the sequence is RRKRRILFSQAQIYELERRFKQQKYLSAPEREHLANLINLTPTQVKIWFQNHRYKCKRSQ. The tract at residues 189–246 is disordered; it reads KRSQKDKEKEQQKEKSYHLKKNIVDDKERSPNKQICNASSSDRSTPEEPVAKAKESGL. Over residues 191–219 the composition is skewed to basic and acidic residues; that stretch reads SQKDKEKEQQKEKSYHLKKNIVDDKERSP. A compositionally biased stretch (polar residues) spans 220–231; the sequence is NKQICNASSSDR. A compositionally biased stretch (basic and acidic residues) spans 232–246; the sequence is STPEEPVAKAKESGL.

This sequence belongs to the NK-2 homeobox family. Intestine and unidentified peripheral parenchymal cells. Slightly higher levels in the cephalic region compared to other body regions.

It is found in the nucleus. In terms of biological role, this protein might be involved in determination and/or differentiation of nerve cells in the continuous replacement of neurons in the cephalic region. The polypeptide is Homeobox protein DTH-2 (DTH-2) (Girardia tigrina (Planarian)).